A 373-amino-acid chain; its full sequence is tRNA pseudouridine synthase Pus10 (373 aa).

The active-site Nucleophile is the D197. Substrate is bound by residues Y265 and Y336.

This sequence belongs to the pseudouridine synthase Pus10 family.

The catalysed reaction is uridine(54) in tRNA = pseudouridine(54) in tRNA. The enzyme catalyses uridine(55) in tRNA = pseudouridine(55) in tRNA. Its function is as follows. Responsible for synthesis of pseudouridine from uracil-54 and uracil-55 in the psi GC loop of transfer RNAs. The sequence is that of tRNA pseudouridine synthase Pus10 from Korarchaeum cryptofilum (strain OPF8).